Consider the following 391-residue polypeptide: Probable sugar efflux transporter (391 aa).

The next 12 helical transmembrane spans lie at 16–36 (VFVF…PVAL), 51–71 (VGLM…PLML), 82–102 (LLFL…AWNF), 110–130 (MGIA…VIRV), 138–158 (QALG…LPLG), 170–190 (TFGV…KLLP), 210–230 (PLLM…FTTY), 247–267 (ITTL…FLFG), 277–297 (FIAF…VFKN), 300–320 (WVVF…GISL), 338–358 (IYSG…SIVI), and 361–381 (LGLG…LFWL).

It belongs to the major facilitator superfamily. SotB (TC 2.A.1.2) family.

The protein resides in the cell inner membrane. Its function is as follows. Involved in the efflux of sugars. The physiological role may be the reduction of the intracellular concentration of toxic sugars or sugar metabolites. The chain is Probable sugar efflux transporter from Helicobacter pylori (strain ATCC 700392 / 26695) (Campylobacter pylori).